The following is a 635-amino-acid chain: Kelch-like protein 31 (635 aa).

One can recognise a BTB domain in the interval cysteine 74 to leucine 138. Residues cysteine 173–glutamine 274 form the BACK domain. Kelch repeat units follow at residues valine 318–glycine 366, phenylalanine 367–glycine 420, leucine 421–glycine 467, isoleucine 469–aspartate 514, alanine 516–asparagine 566, and lysine 567–isoleucine 615.

In terms of tissue distribution, strongly expressed in fast skeletal muscle, and weakly in heart. Not expressed in other tissues.

This chain is Kelch-like protein 31 (klhl31), found in Danio rerio (Zebrafish).